The following is a 576-amino-acid chain: RING finger and SPRY domain-containing protein 1 (576 aa).

The first 16 residues, 1 to 16 (MIVFGWAVFLASRSLG), serve as a signal peptide directing secretion. S50 carries the phosphoserine modification. The interval 50–99 (SGTDDSVDTQQQQAENSAVPTADTRSQPRDPVRPPRRGRGPHEPRRKKQN) is disordered. The segment covering 57–68 (DTQQQQAENSAV) has biased composition (polar residues). The span at 83 to 97 (PPRRGRGPHEPRRKK) shows a compositional bias: basic residues. A B30.2/SPRY domain is found at 300-483 (LFLKEGRQLT…CEFNFGAKPF (184 aa)). N-linked (GlcNAc...) asparagine glycosylation occurs at N314. The RING-type zinc-finger motif lies at 527 to 562 (CSLCCDEVADTQLKPCGHSDLCMDCALQLETCPLCR).

The protein localises to the secreted. In Pongo abelii (Sumatran orangutan), this protein is RING finger and SPRY domain-containing protein 1 (RSPRY1).